The sequence spans 429 residues: Enolase (429 aa).

Position 162 (glutamine 162) interacts with (2R)-2-phosphoglycerate. Glutamate 204 serves as the catalytic Proton donor. Mg(2+) is bound by residues aspartate 241, glutamate 286, and aspartate 313. (2R)-2-phosphoglycerate is bound by residues lysine 338, arginine 367, serine 368, and lysine 389. The Proton acceptor role is filled by lysine 338.

The protein belongs to the enolase family. It depends on Mg(2+) as a cofactor.

Its subcellular location is the cytoplasm. It localises to the secreted. The protein localises to the cell surface. It catalyses the reaction (2R)-2-phosphoglycerate = phosphoenolpyruvate + H2O. The protein operates within carbohydrate degradation; glycolysis; pyruvate from D-glyceraldehyde 3-phosphate: step 4/5. In terms of biological role, catalyzes the reversible conversion of 2-phosphoglycerate (2-PG) into phosphoenolpyruvate (PEP). It is essential for the degradation of carbohydrates via glycolysis. The sequence is that of Enolase from Halalkalibacterium halodurans (strain ATCC BAA-125 / DSM 18197 / FERM 7344 / JCM 9153 / C-125) (Bacillus halodurans).